The sequence spans 148 residues: MADQLTDDQISEFKEAFSLFDKDGDGCITTKELGTVMRSLGQNPTEAELQDMINEVDRDGNGTIDFPEFLNLMARKMKDTDSEEELKEAFRVFDKDQNGFISAAELRHVMTNLGEKLTDEVDEMIREADVDGDGQINYEEFVKVMMAK.

An N-acetylalanine modification is found at A2. EF-hand domains follow at residues 8–43 (DQISEFKEAFSLFDKDGDGCITTKELGTVMRSLGQN), 44–79 (PTEAELQDMINEVDRDGNGTIDFPEFLNLMARKMKD), 81–116 (DSEEELKEAFRVFDKDQNGFISAAELRHVMTNLGEK), and 116–148 (KLTDEVDEMIREADVDGDGQINYEEFVKVMMAK). Positions 21, 23, 25, 27, 32, 57, 59, 61, 63, 68, 94, 96, 98, and 105 each coordinate Ca(2+). K116 is modified (N6,N6,N6-trimethyllysine). Positions 129, 131, 133, 135, and 140 each coordinate Ca(2+).

Belongs to the calmodulin family.

Calmodulin mediates the control of a large number of enzymes, ion channels and other proteins by Ca(2+). Among the enzymes to be stimulated by the calmodulin-Ca(2+) complex are a number of protein kinases and phosphatases. This is Calmodulin (CAMF1) from Fagus sylvatica (Beechnut).